The following is a 124-amino-acid chain: Large ribosomal subunit protein bL12 (124 aa).

This sequence belongs to the bacterial ribosomal protein bL12 family. Homodimer. Part of the ribosomal stalk of the 50S ribosomal subunit. Forms a multimeric L10(L12)X complex, where L10 forms an elongated spine to which 2 to 4 L12 dimers bind in a sequential fashion. Binds GTP-bound translation factors.

Functionally, forms part of the ribosomal stalk which helps the ribosome interact with GTP-bound translation factors. Is thus essential for accurate translation. The sequence is that of Large ribosomal subunit protein bL12 from Wolinella succinogenes (strain ATCC 29543 / DSM 1740 / CCUG 13145 / JCM 31913 / LMG 7466 / NCTC 11488 / FDC 602W) (Vibrio succinogenes).